Here is a 296-residue protein sequence, read N- to C-terminus: PYK10-binding protein 2 (296 aa).

Residues 1–20 form a disordered region; the sequence is MAQKVEAKGGKGGNQWDDGS. N-acetylalanine is present on A2. 2 Jacalin-type lectin domains span residues 2–142 and 150–293; these read AQKV…YFAP and AKPL…HVRP.

Belongs to the jacalin lectin family. In terms of assembly, component of the PYK10 complex, at least composed of PYK10/BGLU23, BGLU21, BGLU22, JAL22, JAL23, PBP1/JAL30, PBP2/JAL31, JAL32, JAL33, JAL34, JAL35, GLL22 and GLL23.

Functionally, polymerizer-type lectin that may facilitate the correct polymerization of BGLU23/PYK10 upon tissue damage. Activates BGLU21, BGLU22 and BGLU23. In Arabidopsis thaliana (Mouse-ear cress), this protein is PYK10-binding protein 2 (PBP2).